A 396-amino-acid polypeptide reads, in one-letter code: Tryptophan synthase beta chain (396 aa).

The residue at position 88 (Lys88) is an N6-(pyridoxal phosphate)lysine.

Belongs to the TrpB family. In terms of assembly, tetramer of two alpha and two beta chains. It depends on pyridoxal 5'-phosphate as a cofactor.

The enzyme catalyses (1S,2R)-1-C-(indol-3-yl)glycerol 3-phosphate + L-serine = D-glyceraldehyde 3-phosphate + L-tryptophan + H2O. It functions in the pathway amino-acid biosynthesis; L-tryptophan biosynthesis; L-tryptophan from chorismate: step 5/5. The beta subunit is responsible for the synthesis of L-tryptophan from indole and L-serine. The sequence is that of Tryptophan synthase beta chain from Shewanella putrefaciens (strain CN-32 / ATCC BAA-453).